The sequence spans 324 residues: Uric acid degradation bifunctional protein TTL (324 aa).

At Ala2 the chain carries N-acetylalanine. Residues Ala2–Leu29 form a required for BRI1-binding region. Positions Ala2–Lys161 are OHCU decarboxylase. The active-site Proton donor; for OHCU decarboxylase activity is the His58. His58, Pro59, Glu80, Phe111, Ile113, and Ala115 together coordinate (S)-allantoin. The tract at residues Lys178–Ser324 is HIU hydrolase. The short motif at Arg182–Leu190 is the Internal peroxisomal targeting signal (PTS2) element.

The protein in the N-terminal section; belongs to the OHCU decarboxylase family. It in the C-terminal section; belongs to the transthyretin family. 5-hydroxyisourate hydrolase subfamily. As to quaternary structure, homodimer. Forms tetramers. Interacts with BRI1 in a kinase-dependent manner. Interacts with B1L. Post-translationally, phosphorylated by BRI1 in vitro. Expressed ubiquitously with highest levels in flowers buds and elongating inflorescences. In terms of tissue distribution, mainly expressed in stems and leaves, and, to a lower extent, in flowers, flower buds and seedlings. As to expression, strongly expressed in flower buds and leaves, to a lower extent in stems, and at low levels in seedlings and flowers.

It is found in the cell membrane. Its subcellular location is the peroxisome. The protein resides in the cytoplasm. The protein localises to the cytosol. It catalyses the reaction 5-hydroxyisourate + H2O = 5-hydroxy-2-oxo-4-ureido-2,5-dihydro-1H-imidazole-5-carboxylate + H(+). It carries out the reaction 5-hydroxy-2-oxo-4-ureido-2,5-dihydro-1H-imidazole-5-carboxylate + H(+) = (S)-allantoin + CO2. It participates in purine metabolism; urate degradation; (S)-allantoin from urate: step 2/3. The protein operates within purine metabolism; urate degradation; (S)-allantoin from urate: step 3/3. In terms of biological role, involved in the last two steps of the degradation of uric acid, i.e. the hydrolysis of 5-hydroxyisourate (HIU) to 2-oxo-4-hydroxy-4-carboxy-5-ureidoimidazoline (OHCU) and its stereoselective decarboxylation to (S)-allantoin, a major ureide compound. Might function as a negative regulator to modulate brassinosteroid-mediated plant growth. Together with B1L, prevents plant growth and development, but by opposition to B1L, negatively regulates cold tolerance, probably in a brassinosteroid (BR) and allantoin-dependent manner. This is Uric acid degradation bifunctional protein TTL from Arabidopsis thaliana (Mouse-ear cress).